Reading from the N-terminus, the 389-residue chain is Methylthioribose-1-phosphate isomerase (389 aa).

The active-site Proton donor is the Asp-258.

This sequence belongs to the eIF-2B alpha/beta/delta subunits family. MtnA subfamily.

It is found in the cytoplasm. Its subcellular location is the nucleus. It carries out the reaction 5-(methylsulfanyl)-alpha-D-ribose 1-phosphate = 5-(methylsulfanyl)-D-ribulose 1-phosphate. The protein operates within amino-acid biosynthesis; L-methionine biosynthesis via salvage pathway; L-methionine from S-methyl-5-thio-alpha-D-ribose 1-phosphate: step 1/6. Catalyzes the interconversion of methylthioribose-1-phosphate (MTR-1-P) into methylthioribulose-1-phosphate (MTRu-1-P). The chain is Methylthioribose-1-phosphate isomerase from Chaetomium globosum (strain ATCC 6205 / CBS 148.51 / DSM 1962 / NBRC 6347 / NRRL 1970) (Soil fungus).